We begin with the raw amino-acid sequence, 962 residues long: Integrator complex subunit 7 (962 aa).

Phosphoserine occurs at positions 338 and 809.

The protein belongs to the Integrator subunit 7 family. As to quaternary structure, component of the Integrator complex, composed of core subunits INTS1, INTS2, INTS3, INTS4, INTS5, INTS6, INTS7, INTS8, INTS9/RC74, INTS10, INTS11/CPSF3L, INTS12, INTS13, INTS14 and INTS15. The core complex associates with protein phosphatase 2A subunits PPP2CA and PPP2R1A, to form the Integrator-PP2A (INTAC) complex. Interacts with NABP2.

It localises to the nucleus. The protein localises to the chromosome. It is found in the cytoplasm. Functionally, component of the integrator complex, a multiprotein complex that terminates RNA polymerase II (Pol II) transcription in the promoter-proximal region of genes. The integrator complex provides a quality checkpoint during transcription elongation by driving premature transcription termination of transcripts that are unfavorably configured for transcriptional elongation: the complex terminates transcription by (1) catalyzing dephosphorylation of the C-terminal domain (CTD) of Pol II subunit POLR2A/RPB1 and SUPT5H/SPT5, (2) degrading the exiting nascent RNA transcript via endonuclease activity and (3) promoting the release of Pol II from bound DNA. The integrator complex is also involved in terminating the synthesis of non-coding Pol II transcripts, such as enhancer RNAs (eRNAs), small nuclear RNAs (snRNAs), telomerase RNAs and long non-coding RNAs (lncRNAs). May be not involved in the recruitment of cytoplasmic dynein to the nuclear envelope by different components of the INT complex. Plays a role in DNA damage response (DDR) signaling during the S phase. In Homo sapiens (Human), this protein is Integrator complex subunit 7.